A 257-amino-acid polypeptide reads, in one-letter code: MGDKKSPTRPKRQAKPTADNGFWDCSVCTFRNSAEAFKCSICDVRKGTSTRKPRINSQLVAQQVAQQYATPPPPKKEKKEKPERPEKDRAEEERPDINPPDEHPVEQRDKDKSEKEQPEKEKKDREKEIIPAITKKPNSKKNRPKSDIHQSPPSERNSIQSGKSTTKTKNSHNSRPKLKNIDRSTAQQLAITVGNVTVIITDFKEKTRTSSTSSSTVTSSASSEQQHQSSGSESMDKGSSRASTPKGDLSLGHDESF.

Disordered regions lie at residues 1 to 24 (MGDK…GFWD) and 45 to 257 (RKGT…DESF). Residues 19–48 (DNGFWDCSVCTFRNSAEAFKCSICDVRKGT) form a RanBP2-type zinc finger. Over residues 74–129 (PKKEKKEKPERPEKDRAEEERPDINPPDEHPVEQRDKDKSEKEQPEKEKKDREKEI) the composition is skewed to basic and acidic residues. Residues 149 to 168 (HQSPPSERNSIQSGKSTTKT) show a composition bias toward polar residues. Over residues 169–178 (KNSHNSRPKL) the composition is skewed to basic residues. The span at 209–233 (TSSTSSSTVTSSASSEQQHQSSGSE) shows a compositional bias: low complexity.

Its subcellular location is the nucleus. The protein resides in the cytoplasm. Functionally, may be implicated in the regulation of the transcription as a repressor of the transcriptional activity of E4TF1. This chain is RING1 and YY1-binding protein B (rybpb), found in Danio rerio (Zebrafish).